Consider the following 396-residue polypeptide: MADLAENVSLPLSQESFEDLWKMNLNLVAVQPPETESWVGYDNFMMEAPLQVEFDPSLFEVSATEPAPQPSISTLDTGSPPTSTVPTTSDYPGALGFQLRFLQSSTAKSVTCTYSPDLNKLFCQLAKTCPVQIVVDHPPPPGAVVRALAIYKKLSDVADVVRRCPHHQSTSENNEGPAPRGHLVRVEGNQRSEYMEDGNTLRHSVLVPYEPPQVGSECTTVLYNFMCNSSCMGGMNRRPILTIITLETQEGQLLGRRSFEVRVCACPGRDRKTEEINLKKQQETTLETKTKPAQGIKRAMKEASLPAPQPGASKKTKSSPAVSDDEIYTLQIRGKEKYEMLKKFNDSLELSELVPVADADKYRQKCLTKRVAKRDFGVGPKKRKKLLVKEEKSDSD.

A transcription activation (acidic) region spans residues 1 to 44 (MADLAENVSLPLSQESFEDLWKMNLNLVAVQPPETESWVGYDNF). Residues 63-89 (ATEPAPQPSISTLDTGSPPTSTVPTTS) are disordered. Positions 77-89 (TGSPPTSTVPTTS) are enriched in low complexity. Residues 90–281 (DYPGALGFQL…KTEEINLKKQ (192 aa)) mediate DNA binding. Zn(2+) is bound by residues cysteine 164, histidine 167, cysteine 227, and cysteine 231. Positions 262-269 (RVCACPGR) are interaction with DNA. A Bipartite nuclear localization signal motif is present at residues 297 to 317 (KRAMKEASLPAPQPGASKKTK). The interval 301 to 322 (KEASLPAPQPGASKKTKSSPAV) is disordered. The interval 325–356 (DEIYTLQIRGKEKYEMLKKFNDSLELSELVPV) is oligomerization. The Nuclear export signal motif lies at 339–350 (EMLKKFNDSLEL). The segment at 369-392 (KRVAKRDFGVGPKKRKKLLVKEEK) is basic (repression of DNA-binding).

It belongs to the p53 family. As to quaternary structure, binds DNA as a homotetramer. Requires Zn(2+) as cofactor.

It localises to the cytoplasm. Its subcellular location is the nucleus. Multifunctional transcription factor that induces cell cycle arrest, DNA repair or apoptosis upon binding to its target DNA sequence. Acts as a tumor suppressor in many tumor types; induces growth arrest or apoptosis depending on the physiological circumstances and cell type. Negatively regulates cell division by controlling expression of a set of genes required for this process. One of the activated genes is an inhibitor of cyclin-dependent kinases. Apoptosis induction seems to be mediated either by stimulation of BAX and FAS antigen expression, or by repression of Bcl-2 expression. This chain is Cellular tumor antigen p53 (tp53), found in Oncorhynchus mykiss (Rainbow trout).